The sequence spans 139 residues: Ribonuclease P protein component (139 aa).

This sequence belongs to the RnpA family. Consists of a catalytic RNA component (M1 or rnpB) and a protein subunit.

It catalyses the reaction Endonucleolytic cleavage of RNA, removing 5'-extranucleotides from tRNA precursor.. In terms of biological role, RNaseP catalyzes the removal of the 5'-leader sequence from pre-tRNA to produce the mature 5'-terminus. It can also cleave other RNA substrates such as 4.5S RNA. The protein component plays an auxiliary but essential role in vivo by binding to the 5'-leader sequence and broadening the substrate specificity of the ribozyme. The sequence is that of Ribonuclease P protein component from Chlamydia felis (strain Fe/C-56) (Chlamydophila felis).